The following is a 967-amino-acid chain: LRR receptor-like serine/threonine-protein kinase ERL2 (967 aa).

A signal peptide spans 1 to 27 (MRRIETMKGLFFCLGMVVFMLLGSVSP). Topologically, residues 28-585 (MNNEGKALMA…SLPKSQVFTR (558 aa)) are extracellular. N70 and N79 each carry an N-linked (GlcNAc...) asparagine glycan. 20 LRR repeats span residues 74–97 (NVVS…GDLM), 98–120 (NLQS…IGNC), 122–145 (SLAY…SKLK), 146–166 (QLEF…ATLT), 170–192 (NLKT…LYWN), 194–216 (VLQY…MCQL), 218–240 (GLWY…IGNC), 242–261 (SFEI…PYNI), 265–287 (QVAT…IGLM), 289–311 (ALAV…LGNL), 313–335 (FTGK…LGNM), 337–359 (RLSY…LGKL), 361–382 (QLFE…NISS), 385–406 (ALNQ…EFRN), 409–431 (SLTY…LGHI), 433–456 (NLDT…GDLE), 457–479 (HLLI…FGNL), 481–503 (SIQI…LGQL), 505–527 (NINS…LTNC), and 529–550 (SLAN…MKNF). N-linked (GlcNAc...) asparagine glycans are attached at residues N228 and N239. Residues N310 and N334 are each glycosylated (N-linked (GlcNAc...) asparagine). N-linked (GlcNAc...) asparagine glycosylation is present at N379. N-linked (GlcNAc...) asparagine glycans are attached at residues N414, N443, N462, and N469. Residues N534, N539, and N549 are each glycosylated (N-linked (GlcNAc...) asparagine). A helical transmembrane segment spans residues 586–606 (VAVICMVLGFITLICMIFIAV). Topologically, residues 607 to 967 (YKSKQQKPVL…FREDISKSSL (361 aa)) are cytoplasmic. 2 positions are modified to phosphothreonine: T640 and T648. In terms of domain architecture, Protein kinase spans 651 to 921 (LDEKYIIGYG…EVSRVLLSLV (271 aa)). ATP contacts are provided by residues 657-665 (IGYGASSTV) and K679. 2 positions are modified to phosphotyrosine: Y724 and Y763. The active-site Proton acceptor is D776. At Y818 the chain carries Phosphotyrosine. T826 bears the Phosphothreonine mark. The segment at 921–955 (VPSPPPKKLPSPAKVQEGEERRESHSSDTTTPQWF) is disordered. Residues 936 to 946 (QEGEERRESHS) show a composition bias toward basic and acidic residues.

This sequence belongs to the protein kinase superfamily. Ser/Thr protein kinase family. As to expression, mostly expressed in developing organs, including bud clusters, flowers, siliques and young rosettes. Also detected in mature aboveground organs, such as leaves, stems and pedicels, but barely in roots.

The protein resides in the membrane. The catalysed reaction is L-seryl-[protein] + ATP = O-phospho-L-seryl-[protein] + ADP + H(+). It carries out the reaction L-threonyl-[protein] + ATP = O-phospho-L-threonyl-[protein] + ADP + H(+). Receptor kinase that regulates inflorescence architecture and organ shape as well as stomatal patterning, including density and clustering, together with ERL1 and ER. The polypeptide is LRR receptor-like serine/threonine-protein kinase ERL2 (ERL2) (Arabidopsis thaliana (Mouse-ear cress)).